Consider the following 208-residue polypeptide: Exosome complex component CSL4 homolog (208 aa).

As to quaternary structure, component of the RNA exosome complex. Ubiquitously expressed.

It localises to the nucleus. The protein localises to the nucleolus. Its subcellular location is the nucleoplasm. In terms of biological role, non-catalytic component of the RNA exosome complex which has 3'-&gt;5' exoribonuclease activity and participates in a multitude of cellular RNA processing and degradation events. Involved in regulation of antisense ribosomal siRNA production. Involved in response to cold-warm shock. The protein is Exosome complex component CSL4 homolog of Caenorhabditis elegans.